We begin with the raw amino-acid sequence, 328 residues long: 3-dehydroquinate synthase (328 aa).

The protein belongs to the archaeal-type DHQ synthase family.

The enzyme catalyses 2-amino-2,3,7-trideoxy-D-lyxo-hept-6-ulosonate + NAD(+) + H2O = 3-dehydroquinate + NH4(+) + NADH + H(+). Functionally, catalyzes the oxidative deamination and cyclization of 2-amino-3,7-dideoxy-D-threo-hept-6-ulosonic acid (ADH) to yield 3-dehydroquinate (DHQ), which is fed into the canonical shikimic pathway of aromatic amino acid biosynthesis. This chain is 3-dehydroquinate synthase, found in Methanosphaerula palustris (strain ATCC BAA-1556 / DSM 19958 / E1-9c).